The chain runs to 96 residues: Aspartyl/glutamyl-tRNA(Asn/Gln) amidotransferase subunit C (96 aa).

This sequence belongs to the GatC family. In terms of assembly, heterotrimer of A, B and C subunits.

It carries out the reaction L-glutamyl-tRNA(Gln) + L-glutamine + ATP + H2O = L-glutaminyl-tRNA(Gln) + L-glutamate + ADP + phosphate + H(+). The enzyme catalyses L-aspartyl-tRNA(Asn) + L-glutamine + ATP + H2O = L-asparaginyl-tRNA(Asn) + L-glutamate + ADP + phosphate + 2 H(+). Its function is as follows. Allows the formation of correctly charged Asn-tRNA(Asn) or Gln-tRNA(Gln) through the transamidation of misacylated Asp-tRNA(Asn) or Glu-tRNA(Gln) in organisms which lack either or both of asparaginyl-tRNA or glutaminyl-tRNA synthetases. The reaction takes place in the presence of glutamine and ATP through an activated phospho-Asp-tRNA(Asn) or phospho-Glu-tRNA(Gln). The polypeptide is Aspartyl/glutamyl-tRNA(Asn/Gln) amidotransferase subunit C (Acaryochloris marina (strain MBIC 11017)).